Here is a 33-residue protein sequence, read N- to C-terminus: Cecropin-C (33 aa).

Position 21 is a 5-hydroxylysine (K21).

Monomer. Hemolymph.

It is found in the secreted. In terms of biological role, cecropins have lytic and antibacterial activity against several Gram-positive and Gram-negative bacteria. Also has activity against fungi. This Heliothis virescens (Tobacco budworm moth) protein is Cecropin-C.